A 196-amino-acid polypeptide reads, in one-letter code: Thymidine kinase (196 aa).

Residues 9–16 (SAMNAGKS) and 88–91 (DEAQ) each bind ATP. Glutamate 89 serves as the catalytic Proton acceptor. Positions 146, 148, 183, and 186 each coordinate Zn(2+).

Belongs to the thymidine kinase family. Homotetramer.

Its subcellular location is the cytoplasm. It carries out the reaction thymidine + ATP = dTMP + ADP + H(+). This is Thymidine kinase from Coxiella burnetii (strain RSA 493 / Nine Mile phase I).